The chain runs to 240 residues: Ion-translocating oxidoreductase complex subunit E (240 aa).

The next 5 membrane-spanning stretches (helical) occupy residues 41–61, 71–91, 95–115, 130–150, and 184–204; these read LGLG…VSLV, LPAF…LMQA, ELYQ…VILG, SFDG…LGGL, and GFLL…LIAL.

It belongs to the NqrDE/RnfAE family. The complex is composed of six subunits: RnfA, RnfB, RnfC, RnfD, RnfE and RnfG.

It localises to the cell inner membrane. Functionally, part of a membrane-bound complex that couples electron transfer with translocation of ions across the membrane. This Pseudomonas aeruginosa (strain ATCC 15692 / DSM 22644 / CIP 104116 / JCM 14847 / LMG 12228 / 1C / PRS 101 / PAO1) protein is Ion-translocating oxidoreductase complex subunit E.